The primary structure comprises 205 residues: Protein phosphatase inhibitor 2 family member C (205 aa).

2 disordered regions span residues 1-51 (MSAS…DESS) and 70-114 (EPGT…DHSC). Positions 12–17 (KGILKN) are required for binding PPP1CC. A compositionally biased stretch (low complexity) spans 19 to 34 (SSSGSSVATSGQQSGG). Residues 43–55 (KSQKWDESSILAT) form a required for binding PPP1CC region. Positions 84 to 102 (DSVRDVEGEDSVRGVEGKE) are enriched in basic and acidic residues. The interval 147 to 150 (HYNE) is required for binding PPP1CC catalytic center, displacing metal ions and inhibition of PPP1CC catalytic activity. The interval 165 to 205 (LQSEDDENEERPQATNEEKTAAEESEEAPLSGGLQTQSCDP) is disordered. Basic and acidic residues predominate over residues 174 to 186 (ERPQATNEEKTAA).

Belongs to the protein phosphatase inhibitor 2 family.

Its function is as follows. Functions as a protein phosphatase inhibitor. It inhibits activity of the catalytic subunit of PP1 and weakly inhibits the activity of myosin-associated phosphates. The protein is Protein phosphatase inhibitor 2 family member C (PPP1R2C) of Macaca fascicularis (Crab-eating macaque).